A 209-amino-acid polypeptide reads, in one-letter code: Rac-like GTP-binding protein ARAC7 (209 aa).

A GTP-binding site is contributed by 13–20 (GDGAVGKT). The Effector region motif lies at 35–43 (YIPTVFDNF). GTP-binding positions include 60 to 64 (DTAGQ) and 118 to 121 (TKLD). S-palmitoyl cysteine attachment occurs at residues cysteine 196, cysteine 203, and cysteine 206.

Belongs to the small GTPase superfamily. Rho family. Post-translationally, although this sequence has a C-terminal -CXXX, it is palmitoylated at Cys-206, rather than prenylated.

It is found in the membrane. In terms of biological role, acts as a negative regulator of abscisic acid (ABA) responses. In Arabidopsis thaliana (Mouse-ear cress), this protein is Rac-like GTP-binding protein ARAC7 (ARAC7).